The sequence spans 296 residues: UDP-N-acetylenolpyruvoylglucosamine reductase (296 aa).

The FAD-binding PCMH-type domain maps to 19–203 (KVGGFAEYFS…LETTQKNLKK (185 aa)). Residue Arg166 is part of the active site. Ser217 functions as the Proton donor in the catalytic mechanism. Glu287 is a catalytic residue.

The protein belongs to the MurB family. FAD serves as cofactor.

It localises to the cytoplasm. It catalyses the reaction UDP-N-acetyl-alpha-D-muramate + NADP(+) = UDP-N-acetyl-3-O-(1-carboxyvinyl)-alpha-D-glucosamine + NADPH + H(+). It participates in cell wall biogenesis; peptidoglycan biosynthesis. Functionally, cell wall formation. The protein is UDP-N-acetylenolpyruvoylglucosamine reductase of Prochlorococcus marinus subsp. pastoris (strain CCMP1986 / NIES-2087 / MED4).